Consider the following 155-residue polypeptide: Small ribosomal subunit protein uS7cz/uS7cy (155 aa).

Belongs to the universal ribosomal protein uS7 family. Part of the 30S ribosomal subunit.

It is found in the plastid. The protein localises to the chloroplast. In terms of biological role, one of the primary rRNA binding proteins, it binds directly to 16S rRNA where it nucleates assembly of the head domain of the 30S subunit. The protein is Small ribosomal subunit protein uS7cz/uS7cy (rps7-A) of Phalaenopsis aphrodite subsp. formosana (Moth orchid).